Reading from the N-terminus, the 213-residue chain is Putative tRNA methyltransferase MPN_351 (213 aa).

Belongs to the TrmK family.

It localises to the cytoplasm. This Mycoplasma pneumoniae (strain ATCC 29342 / M129 / Subtype 1) (Mycoplasmoides pneumoniae) protein is Putative tRNA methyltransferase MPN_351.